Here is a 269-residue protein sequence, read N- to C-terminus: Ribonuclease HII (269 aa).

One can recognise an RNase H type-2 domain in the interval 61-250 (RLVCGVDEAG…VRKMLSPGLE (190 aa)). Asp67, Glu68, and Asp158 together coordinate a divalent metal cation.

Belongs to the RNase HII family. Mn(2+) serves as cofactor. It depends on Mg(2+) as a cofactor.

It localises to the cytoplasm. It catalyses the reaction Endonucleolytic cleavage to 5'-phosphomonoester.. In terms of biological role, endonuclease that specifically degrades the RNA of RNA-DNA hybrids. The chain is Ribonuclease HII from Parvibaculum lavamentivorans (strain DS-1 / DSM 13023 / NCIMB 13966).